Here is a 158-residue protein sequence, read N- to C-terminus: Transcription elongation factor GreA (158 aa).

A coiled-coil region spans residues 2 to 70 (ENQKQYPMTQ…IEQDIQRIEH (69 aa)).

It belongs to the GreA/GreB family.

Functionally, necessary for efficient RNA polymerase transcription elongation past template-encoded arresting sites. The arresting sites in DNA have the property of trapping a certain fraction of elongating RNA polymerases that pass through, resulting in locked ternary complexes. Cleavage of the nascent transcript by cleavage factors such as GreA or GreB allows the resumption of elongation from the new 3'terminus. GreA releases sequences of 2 to 3 nucleotides. The polypeptide is Transcription elongation factor GreA (Staphylococcus epidermidis (strain ATCC 35984 / DSM 28319 / BCRC 17069 / CCUG 31568 / BM 3577 / RP62A)).